The following is a 133-amino-acid chain: Small ribosomal subunit protein uS8 (133 aa).

This sequence belongs to the universal ribosomal protein uS8 family. Part of the 30S ribosomal subunit. Contacts proteins S5 and S12.

Functionally, one of the primary rRNA binding proteins, it binds directly to 16S rRNA central domain where it helps coordinate assembly of the platform of the 30S subunit. This chain is Small ribosomal subunit protein uS8, found in Prochlorococcus marinus (strain AS9601).